The primary structure comprises 155 residues: 2-C-methyl-D-erythritol 2,4-cyclodiphosphate synthase (155 aa).

A divalent metal cation is bound by residues Asp8 and His10. Residues 8–10 (DVH) and 34–35 (HS) contribute to the 4-CDP-2-C-methyl-D-erythritol 2-phosphate site. Position 42 (His42) interacts with a divalent metal cation. 4-CDP-2-C-methyl-D-erythritol 2-phosphate is bound by residues 56-58 (DIG), 61-65 (FPDSD), 100-106 (AQKPKML), 132-135 (TTEE), Phe139, and Lys142.

The protein belongs to the IspF family. In terms of assembly, homotrimer. The cofactor is a divalent metal cation.

It catalyses the reaction 4-CDP-2-C-methyl-D-erythritol 2-phosphate = 2-C-methyl-D-erythritol 2,4-cyclic diphosphate + CMP. Its pathway is isoprenoid biosynthesis; isopentenyl diphosphate biosynthesis via DXP pathway; isopentenyl diphosphate from 1-deoxy-D-xylulose 5-phosphate: step 4/6. Involved in the biosynthesis of isopentenyl diphosphate (IPP) and dimethylallyl diphosphate (DMAPP), two major building blocks of isoprenoid compounds. Catalyzes the conversion of 4-diphosphocytidyl-2-C-methyl-D-erythritol 2-phosphate (CDP-ME2P) to 2-C-methyl-D-erythritol 2,4-cyclodiphosphate (ME-CPP) with a corresponding release of cytidine 5-monophosphate (CMP). This is 2-C-methyl-D-erythritol 2,4-cyclodiphosphate synthase from Clostridium botulinum (strain Kyoto / Type A2).